Here is a 705-residue protein sequence, read N- to C-terminus: Elongation factor G (705 aa).

The tr-type G domain occupies 7–287 (HLTRNIGIMA…YVCAFLPSPL (281 aa)). Residues 16–23 (AHIDAGKT), 84–88 (DTPGH), and 138–141 (NKMD) each bind GTP. The interval 291–312 (NVVGTNPDTGAEEDRKPSEDDK) is disordered. Over residues 302–312 (EEDRKPSEDDK) the composition is skewed to basic and acidic residues.

The protein belongs to the TRAFAC class translation factor GTPase superfamily. Classic translation factor GTPase family. EF-G/EF-2 subfamily.

Its subcellular location is the cytoplasm. Functionally, catalyzes the GTP-dependent ribosomal translocation step during translation elongation. During this step, the ribosome changes from the pre-translocational (PRE) to the post-translocational (POST) state as the newly formed A-site-bound peptidyl-tRNA and P-site-bound deacylated tRNA move to the P and E sites, respectively. Catalyzes the coordinated movement of the two tRNA molecules, the mRNA and conformational changes in the ribosome. The chain is Elongation factor G from Bacteroides fragilis (strain ATCC 25285 / DSM 2151 / CCUG 4856 / JCM 11019 / LMG 10263 / NCTC 9343 / Onslow / VPI 2553 / EN-2).